We begin with the raw amino-acid sequence, 348 residues long: Isopentenyl-diphosphate delta-isomerase (348 aa).

5 to 6 contacts substrate; it reads RK. Residues serine 61, 62 to 64, serine 92, and asparagine 120 contribute to the FMN site; that span reads SMT. Position 92-94 (92-94) interacts with substrate; that stretch reads SMR. Residue glutamine 159 participates in substrate binding. Glutamate 160 serves as a coordination point for Mg(2+). FMN contacts are provided by residues lysine 189, serine 214, threonine 219, 269–271, and 290–291; these read GLR and AR.

Belongs to the IPP isomerase type 2 family. As to quaternary structure, homooctamer. Dimer of tetramers. It depends on FMN as a cofactor. The cofactor is NADPH. Requires Mg(2+) as cofactor.

The protein localises to the cytoplasm. The catalysed reaction is isopentenyl diphosphate = dimethylallyl diphosphate. Functionally, involved in the biosynthesis of isoprenoids. Catalyzes the 1,3-allylic rearrangement of the homoallylic substrate isopentenyl (IPP) to its allylic isomer, dimethylallyl diphosphate (DMAPP). This is Isopentenyl-diphosphate delta-isomerase from Thermoplasma acidophilum (strain ATCC 25905 / DSM 1728 / JCM 9062 / NBRC 15155 / AMRC-C165).